A 420-amino-acid chain; its full sequence is Exodeoxyribonuclease 7 large subunit (420 aa).

The protein belongs to the XseA family. As to quaternary structure, heterooligomer composed of large and small subunits.

It localises to the cytoplasm. The enzyme catalyses Exonucleolytic cleavage in either 5'- to 3'- or 3'- to 5'-direction to yield nucleoside 5'-phosphates.. In terms of biological role, bidirectionally degrades single-stranded DNA into large acid-insoluble oligonucleotides, which are then degraded further into small acid-soluble oligonucleotides. The chain is Exodeoxyribonuclease 7 large subunit from Helicobacter pylori (strain HPAG1).